The primary structure comprises 764 residues: Probable cyclic nucleotide-gated ion channel 20, chloroplastic (764 aa).

The transit peptide at 1–25 (MASHNENDDIPMLPISDPSSRTRAR) directs the protein to the chloroplast. Positions 1–40 (MASHNENDDIPMLPISDPSSRTRARAFTSRSRSVSLSNPT) are disordered. Positions 19 to 33 (SSRTRARAFTSRSRS) are enriched in low complexity. At 26 to 204 (AFTSRSRSVS…PHAKEVQTWT (179 aa)) the chain is on the stromal side. A helical membrane pass occupies residues 205 to 225 (KFFALSCLLAIFIDPLFFFLI). At 226 to 242 (KVQEQNKCIMIDWPMTK) the chain is on the lumenal side. The chain crosses the membrane as a helical span at residues 243–263 (AFVAVRSVTDVIFTMNILLQF). Topologically, residues 264–295 (RLAYVARESTVVGAGQLVSHPKKIALHYLKGK) are stromal. Residues 296-316 (FFLDLFIVMPLPQILILWIIP) form a helical membrane-spanning segment. Residues 317-329 (AHLGASGANYAKN) are Lumenal-facing. A helical transmembrane segment spans residues 330-350 (LLRAAVLFQYIPKLYRLLPFL). Residues 351–366 (AGQTPTGFIFESAWAN) lie on the Stromal side of the membrane. Residues 367-387 (FVINLLTFMLAGHVVGSCWYL) form a helical membrane-spanning segment. Residues 388-488 (FGLQRVNQCL…GNQVPSYFLG (101 aa)) lie on the Lumenal side of the membrane. A helical membrane pass occupies residues 489 to 509 (EVFFTMGIIGLGLLLFALLIG). The Stromal segment spans residues 510–764 (NMQNFLQALG…LCTPQSSYSL (255 aa)). A nucleoside 3',5'-cyclic phosphate-binding positions include 593–710 (IFSL…EDVT) and Glu-658. The segment at 713 to 729 (FSRFLRSHRVQGAIRYD) is calmodulin-binding. The region spanning 734 to 763 (RLRAARQIQVAWRYRRRRLHRLCTPQSSYS) is the IQ domain.

It belongs to the cyclic nucleotide-gated cation channel (TC 1.A.1.5) family. As to quaternary structure, homotetramer or heterotetramer.

The protein localises to the plastid. It localises to the chloroplast thylakoid membrane. Its function is as follows. Probable cyclic nucleotide-gated ion channel. This is Probable cyclic nucleotide-gated ion channel 20, chloroplastic (CNGC20) from Arabidopsis thaliana (Mouse-ear cress).